Here is a 345-residue protein sequence, read N- to C-terminus: Serine/arginine-rich splicing factor 6 (345 aa).

The region spanning 1–72 (MPRVYIGRLS…ERVIVEHARG (72 aa)) is the RRM 1 domain. 3 positions are modified to phosphoserine: Ser45, Ser81, and Ser84. The disordered stretch occupies residues 75–102 (RDRDGYSYGSRSGGGGYSSRRTSGRDKY). Residues 110-183 (FRLIVENLSS…RNIRLIEDKP (74 aa)) enclose the RRM 2 domain. The residue at position 165 (Lys165) is an N6-acetyllysine. Residues 176-345 (IRLIEDKPRT…RSRSRSSSRD (170 aa)) are disordered. A Glycyl lysine isopeptide (Lys-Gly) (interchain with G-Cter in SUMO2) cross-link involves residue Lys182. The span at 185 to 250 (TSHRRSYSGS…RKSRSKSKSK (66 aa)) shows a compositional bias: basic residues. Basic and acidic residues-rich tracts occupy residues 264 to 273 (RSKDEYEKSR) and 282 to 293 (SPKENGKGDIKS). 2 positions are modified to phosphoserine: Ser299 and Ser301. Residue Ser305 is modified to Phosphoserine; by DYRK1A. Phosphoserine occurs at positions 316 and 318. A compositionally biased stretch (basic residues) spans 323 to 345 (RASRSHSRSRSKSRSRSRSSSRD).

It belongs to the splicing factor SR family. As to quaternary structure, binds SREK1/SFRS12. Interacts with DYRK1A. In terms of processing, extensively phosphorylated on serine residues in the RS domain. Phosphorylated by DYRK1A, probably in the RS domain. Phosphorylation by DYRK1A modulates alternative splice site selection and inhibits the expression of MAPT/Tau exon 10.

It localises to the nucleus. It is found in the nucleus speckle. Its function is as follows. Plays a role in constitutive splicing and modulates the selection of alternative splice sites. Plays a role in the alternative splicing of MAPT/Tau exon 10. Binds to alternative exons of TNC pre-mRNA and promotes the expression of alternatively spliced TNC. Plays a role in wound healing and in the regulation of keratinocyte differentiation and proliferation via its role in alternative splicing. The chain is Serine/arginine-rich splicing factor 6 (SRSF6) from Bos taurus (Bovine).